The sequence spans 488 residues: Cytochrome P450 family 716 subfamily AD polypeptide 2 (488 aa).

A helical transmembrane segment spans residues 5–25; that stretch reads LLLLSTLLILTLCCHFFYLFI. Heme is bound at residue Cys433.

This sequence belongs to the cytochrome P450 family. Heme serves as cofactor. In terms of tissue distribution, expressed in maturing fruits and in juice vesicles.

It localises to the membrane. The catalysed reaction is (1R,2R,3S,8R,10R,11R,15S,16S)-3-(acetyloxy)-15-[(4R)-4-[(2S)-3,3-dimethyloxiran-2-yl]-1,4-dihydroxybutan-2-yl]-2,7,7,11,16-pentamethyl-5-oxo-6-oxatetracyclo[9.7.0.0(2,8).0(12,16)]octadec-12-en-10-yl acetate + reduced [NADPH--hemoprotein reductase] + O2 = (1R,2R,3S,8R,10R,11R,15S,16S)-3-(acetyloxy)-15-(1-hydroxy-4-oxobutan-2-yl)-2,7,7,11,16-pentamethyl-5-oxo-6-oxatetracyclo[9.7.0.0(2,8).0(12,16)]octadec-12-en-10-yl acetate + 2-methylpropanoate + oxidized [NADPH--hemoprotein reductase] + H2O + 2 H(+). It functions in the pathway secondary metabolite biosynthesis; terpenoid biosynthesis. Functionally, monooxygenase involved in the biosynthesis of limonoids triterpene natural products such as limonin, a compound with insecticidal activity responsible for the bitter taste in citrus. Catalyzes the formation of (1R,2R,3S,8R,10R,11R,15S,16S)-3-(acetyloxy)-15-(1-hydroxy-4-oxobutan-2-yl)-2,7,7,11,16-pentamethyl-5-oxo-6-oxatetracyclo[9.7.0.0(2,8).0(12,16)]octadec-12-en-10-yl acetate. The sequence is that of Cytochrome P450 family 716 subfamily AD polypeptide 2 from Citrus sinensis (Sweet orange).